Reading from the N-terminus, the 107-residue chain is Thioredoxin-1 (107 aa).

In terms of domain architecture, Thioredoxin spans 2–106; that stretch reads ASVRTMTDFH…LTNMMAKLVK (105 aa). Catalysis depends on nucleophile residues Cys-31 and Cys-34. An intrachain disulfide couples Cys-31 to Cys-34.

This sequence belongs to the thioredoxin family.

Its subcellular location is the nucleus. Its function is as follows. Participates in various redox reactions through the reversible oxidation of its active center dithiol to a disulfide and catalyzes dithiol-disulfide exchange reactions. As a reducing substrate of peroxiredoxin 1, thioredoxin 2 is preferred over thioredoxin 1. Required for female meiosis and early embryonic development. The protein is Thioredoxin-1 (dhd) of Drosophila yakuba (Fruit fly).